The chain runs to 170 residues: UPF0316 protein CLJ_B0679 (170 aa).

The next 2 helical transmembrane spans lie at 1 to 21 and 36 to 56; these read MLSYYAFIFFAKIMEVALMTI and IIGFIEVTIWLYVTSSVLSGI.

Belongs to the UPF0316 family.

It is found in the cell membrane. The chain is UPF0316 protein CLJ_B0679 from Clostridium botulinum (strain 657 / Type Ba4).